The primary structure comprises 170 residues: Adenine phosphoribosyltransferase (170 aa).

The protein belongs to the purine/pyrimidine phosphoribosyltransferase family. In terms of assembly, homodimer.

It is found in the cytoplasm. It carries out the reaction AMP + diphosphate = 5-phospho-alpha-D-ribose 1-diphosphate + adenine. It functions in the pathway purine metabolism; AMP biosynthesis via salvage pathway; AMP from adenine: step 1/1. Catalyzes a salvage reaction resulting in the formation of AMP, that is energically less costly than de novo synthesis. This is Adenine phosphoribosyltransferase from Mycoplasmopsis pulmonis (strain UAB CTIP) (Mycoplasma pulmonis).